A 21-amino-acid polypeptide reads, in one-letter code: Bombinin-H4 (21 aa).

The residue at position 2 (Ile2) is a D-allo-isoleucine. Ile20 is subject to Isoleucine amide.

This sequence belongs to the bombinin family. Expressed by the skin glands.

It is found in the secreted. Has antimicrobial and hemolytic activities. This chain is Bombinin-H4, found in Bombina variegata (Yellow-bellied toad).